The sequence spans 561 residues: 2-methylisocitrate lyase, mitochondrial (561 aa).

The segment at K154–K177 is disordered. The span at S157–K177 shows a compositional bias: basic and acidic residues. The active site involves C228.

Belongs to the isocitrate lyase/PEP mutase superfamily. Isocitrate lyase family. Requires Mg(2+) as cofactor.

It is found in the mitochondrion matrix. It carries out the reaction (2S,3R)-3-hydroxybutane-1,2,3-tricarboxylate = pyruvate + succinate. It functions in the pathway organic acid metabolism; propanoate degradation. In terms of biological role, component of the methylcitrate cycle that catalyzes the formation of pyruvate and succinate from 2-methylisocitrate during the metabolism of endogenous propionyl-CoA. Plays an important role for growth and development, but also in antagonism, root colonization and induction of defense responses in plants. In Hypocrea atroviridis (strain ATCC 20476 / IMI 206040) (Trichoderma atroviride), this protein is 2-methylisocitrate lyase, mitochondrial.